Consider the following 357-residue polypeptide: RNA 3'-terminal phosphate cyclase (357 aa).

ATP contacts are provided by residues glutamine 102 and 293 to 296 (HMGD). Histidine 319 acts as the Tele-AMP-histidine intermediate in catalysis.

This sequence belongs to the RNA 3'-terminal cyclase family. Type 1 subfamily.

It is found in the cytoplasm. The catalysed reaction is a 3'-end 3'-phospho-ribonucleotide-RNA + ATP = a 3'-end 2',3'-cyclophospho-ribonucleotide-RNA + AMP + diphosphate. Catalyzes the conversion of 3'-phosphate to a 2',3'-cyclic phosphodiester at the end of RNA. The mechanism of action of the enzyme occurs in 3 steps: (A) adenylation of the enzyme by ATP; (B) transfer of adenylate to an RNA-N3'P to produce RNA-N3'PP5'A; (C) and attack of the adjacent 2'-hydroxyl on the 3'-phosphorus in the diester linkage to produce the cyclic end product. The biological role of this enzyme is unknown but it is likely to function in some aspects of cellular RNA processing. The sequence is that of RNA 3'-terminal phosphate cyclase from Staphylothermus marinus (strain ATCC 43588 / DSM 3639 / JCM 9404 / F1).